A 318-amino-acid polypeptide reads, in one-letter code: Aspartate carbamoyltransferase catalytic subunit (318 aa).

Positions 54 and 55 each coordinate carbamoyl phosphate. Lysine 82 is a binding site for L-aspartate. Residues arginine 104, histidine 134, and glutamine 137 each contribute to the carbamoyl phosphate site. The L-aspartate site is built by arginine 174 and arginine 230. Residues glycine 271 and proline 272 each coordinate carbamoyl phosphate.

Belongs to the aspartate/ornithine carbamoyltransferase superfamily. ATCase family. As to quaternary structure, heterododecamer (2C3:3R2) of six catalytic PyrB chains organized as two trimers (C3), and six regulatory PyrI chains organized as three dimers (R2).

The enzyme catalyses carbamoyl phosphate + L-aspartate = N-carbamoyl-L-aspartate + phosphate + H(+). Its pathway is pyrimidine metabolism; UMP biosynthesis via de novo pathway; (S)-dihydroorotate from bicarbonate: step 2/3. Its function is as follows. Catalyzes the condensation of carbamoyl phosphate and aspartate to form carbamoyl aspartate and inorganic phosphate, the committed step in the de novo pyrimidine nucleotide biosynthesis pathway. The sequence is that of Aspartate carbamoyltransferase catalytic subunit from Clavibacter michiganensis subsp. michiganensis (strain NCPPB 382).